Reading from the N-terminus, the 304-residue chain is dTDP-4-dehydrorhamnose reductase (304 aa).

NADH contacts are provided by residues 16–18 (GML), 42–43 (DI), and 66–68 (AWT). Residues 17 to 18 (ML), 42 to 43 (DI), and 66 to 68 (AWT) contribute to the NADPH site. DTDP-beta-L-rhamnose is bound at residue 107 to 108 (TD). Residues Tyr131 and Lys135 each contribute to the NADH site. Residues Tyr131 and Lys135 each coordinate NADPH. Tyr131 (proton donor/acceptor) is an active-site residue. Residue Trp157 participates in dTDP-beta-L-rhamnose binding.

This sequence belongs to the dTDP-4-dehydrorhamnose reductase family. As to quaternary structure, homodimer. It depends on Mg(2+) as a cofactor.

It catalyses the reaction dTDP-beta-L-rhamnose + NADP(+) = dTDP-4-dehydro-beta-L-rhamnose + NADPH + H(+). It functions in the pathway carbohydrate biosynthesis; dTDP-L-rhamnose biosynthesis. It participates in antibiotic biosynthesis; streptomycin biosynthesis. Functionally, involved in the biosynthesis of the streptose moiety of streptomycin. Catalyzes the reduction of dTDP-6-deoxy-L-lyxo-4-hexulose to yield dTDP-L-rhamnose. RmlD uses NADH and NADPH nearly equally well. The sequence is that of dTDP-4-dehydrorhamnose reductase from Streptomyces griseus.